The chain runs to 188 residues: Phosphoribosylglycinamide formyltransferase (188 aa).

12–14 (GSN) contacts N(1)-(5-phospho-beta-D-ribosyl)glycinamide. (6R)-10-formyltetrahydrofolate is bound by residues K66, 91 to 94 (MRLI), and N108. H110 (proton donor) is an active-site residue.

The protein belongs to the GART family.

It catalyses the reaction N(1)-(5-phospho-beta-D-ribosyl)glycinamide + (6R)-10-formyltetrahydrofolate = N(2)-formyl-N(1)-(5-phospho-beta-D-ribosyl)glycinamide + (6S)-5,6,7,8-tetrahydrofolate + H(+). It functions in the pathway purine metabolism; IMP biosynthesis via de novo pathway; N(2)-formyl-N(1)-(5-phospho-D-ribosyl)glycinamide from N(1)-(5-phospho-D-ribosyl)glycinamide (10-formyl THF route): step 1/1. Its function is as follows. Catalyzes the transfer of a formyl group from 10-formyltetrahydrofolate to 5-phospho-ribosyl-glycinamide (GAR), producing 5-phospho-ribosyl-N-formylglycinamide (FGAR) and tetrahydrofolate. The polypeptide is Phosphoribosylglycinamide formyltransferase (Staphylococcus aureus (strain MSSA476)).